The sequence spans 315 residues: Pantothenate kinase (315 aa).

Residue 94–101 (GSVAVGKS) coordinates ATP.

This sequence belongs to the prokaryotic pantothenate kinase family.

Its subcellular location is the cytoplasm. It catalyses the reaction (R)-pantothenate + ATP = (R)-4'-phosphopantothenate + ADP + H(+). It functions in the pathway cofactor biosynthesis; coenzyme A biosynthesis; CoA from (R)-pantothenate: step 1/5. This is Pantothenate kinase from Citrobacter koseri (strain ATCC BAA-895 / CDC 4225-83 / SGSC4696).